We begin with the raw amino-acid sequence, 393 residues long: Probable protein phosphatase 2C 68 (393 aa).

The region spanning 56 to 359 is the PPM-type phosphatase domain; that stretch reads DFSIAVVQAN…DDITVVVIFI (304 aa). Positions 87, 88, 291, and 350 each coordinate Mn(2+).

The protein belongs to the PP2C family. Mg(2+) serves as cofactor. It depends on Mn(2+) as a cofactor.

The enzyme catalyses O-phospho-L-seryl-[protein] + H2O = L-seryl-[protein] + phosphate. The catalysed reaction is O-phospho-L-threonyl-[protein] + H2O = L-threonyl-[protein] + phosphate. Its function is as follows. May dephosphorylate and repress plasma membrane H(+)-ATPases (PM H(+)-ATPases, e.g. AHA1 and AHA2), thus influencing negatively plant growth and fitness. This is Probable protein phosphatase 2C 68 from Arabidopsis thaliana (Mouse-ear cress).